The primary structure comprises 557 residues: Glutathione hydrolase proenzyme (557 aa).

The first 24 residues, 1-24 (MQPVLFRTLSLGVAIAAASSSAFA), serve as a signal peptide directing secretion. Arg-94 contacts L-glutamate. Thr-364 (nucleophile) is an active-site residue. L-glutamate-binding positions include Thr-382, Asn-384, Glu-403, Asp-406, 435 to 436 (SS), and 456 to 457 (GG).

Belongs to the gamma-glutamyltransferase family. In terms of assembly, this enzyme consists of two polypeptide chains, which are synthesized in precursor form from a single polypeptide. Cleaved by autocatalysis into a large and a small subunit.

The protein localises to the periplasm. The enzyme catalyses an N-terminal (5-L-glutamyl)-[peptide] + an alpha-amino acid = 5-L-glutamyl amino acid + an N-terminal L-alpha-aminoacyl-[peptide]. It carries out the reaction glutathione + H2O = L-cysteinylglycine + L-glutamate. The catalysed reaction is an S-substituted glutathione + H2O = an S-substituted L-cysteinylglycine + L-glutamate. It functions in the pathway sulfur metabolism; glutathione metabolism. This Pseudomonas aeruginosa (strain ATCC 15692 / DSM 22644 / CIP 104116 / JCM 14847 / LMG 12228 / 1C / PRS 101 / PAO1) protein is Glutathione hydrolase proenzyme (ggt).